The primary structure comprises 161 residues: RNA pyrophosphohydrolase (161 aa).

The Nudix hydrolase domain occupies 12-154 (PYRPGVGMMI…KRKLYQAVVK (143 aa)). The short motif at 46–67 (GGIVPGETPSIAAMREMLEEIG) is the Nudix box element.

It belongs to the Nudix hydrolase family. RppH subfamily. It depends on a divalent metal cation as a cofactor.

Accelerates the degradation of transcripts by removing pyrophosphate from the 5'-end of triphosphorylated RNA, leading to a more labile monophosphorylated state that can stimulate subsequent ribonuclease cleavage. The sequence is that of RNA pyrophosphohydrolase from Rickettsia canadensis (strain McKiel).